Here is a 600-residue protein sequence, read N- to C-terminus: Elongation factor 4 (600 aa).

Residues 5-187 (KYIRNFSIIA…AIVNKLPPPK (183 aa)) form the tr-type G domain. Residues 17 to 22 (DHGKST) and 134 to 137 (NKID) each bind GTP.

The protein belongs to the TRAFAC class translation factor GTPase superfamily. Classic translation factor GTPase family. LepA subfamily.

It is found in the cell inner membrane. The enzyme catalyses GTP + H2O = GDP + phosphate + H(+). In terms of biological role, required for accurate and efficient protein synthesis under certain stress conditions. May act as a fidelity factor of the translation reaction, by catalyzing a one-codon backward translocation of tRNAs on improperly translocated ribosomes. Back-translocation proceeds from a post-translocation (POST) complex to a pre-translocation (PRE) complex, thus giving elongation factor G a second chance to translocate the tRNAs correctly. Binds to ribosomes in a GTP-dependent manner. In Rickettsia canadensis (strain McKiel), this protein is Elongation factor 4.